An 85-amino-acid chain; its full sequence is Large ribosomal subunit protein bL27 (85 aa).

The tract at residues 1–26 (MAHKKGVGSSRNGRDSNPKMLGVKRF) is disordered.

Belongs to the bacterial ribosomal protein bL27 family.

This Roseiflexus sp. (strain RS-1) protein is Large ribosomal subunit protein bL27.